The sequence spans 633 residues: Chaperone protein HtpG (633 aa).

Positions 1–341 are a; substrate-binding; sequence MTAPHETMSF…SADLPLNVSR (341 aa). The interval 342–562 is b; it reads ELLQESRDVK…EGDMSGYLQR (221 aa). The c stretch occupies residues 563-633; that stretch reads LLKQAGQKAP…YVQRVNKLLA (71 aa).

This sequence belongs to the heat shock protein 90 family. Homodimer.

It is found in the cytoplasm. Functionally, molecular chaperone. Has ATPase activity. The sequence is that of Chaperone protein HtpG from Cupriavidus taiwanensis (strain DSM 17343 / BCRC 17206 / CCUG 44338 / CIP 107171 / LMG 19424 / R1) (Ralstonia taiwanensis (strain LMG 19424)).